The primary structure comprises 102 residues: ATP-dependent Clp protease adapter protein ClpS (102 aa).

The protein belongs to the ClpS family. Binds to the N-terminal domain of the chaperone ClpA.

In terms of biological role, involved in the modulation of the specificity of the ClpAP-mediated ATP-dependent protein degradation. The polypeptide is ATP-dependent Clp protease adapter protein ClpS (Shewanella baltica (strain OS155 / ATCC BAA-1091)).